The following is a 291-amino-acid chain: Presqualene diphosphate synthase (291 aa).

A disordered region spans residues Met1–Ser23.

Belongs to the phytoene/squalene synthase family. HpnD subfamily.

The enzyme catalyses 2 (2E,6E)-farnesyl diphosphate = presqualene diphosphate + diphosphate. It participates in secondary metabolite biosynthesis; hopanoid biosynthesis. In terms of biological role, involved in the biosynthesis of the hopanoid precursor squalene (SQ) from farnesyl diphosphate (FPP). Catalyzes the first step, the formation of presqualene diphosphate (PSPP) from two molecules of FPP. This chain is Presqualene diphosphate synthase, found in Zymomonas mobilis subsp. mobilis (strain ATCC 31821 / ZM4 / CP4).